The following is a 386-amino-acid chain: MATTKSFLILIFMILATTSSTFAQLGEMVTVLSIDGGGIRGIIPATILEFLEGQLQEMDNNADARLADYFDVIGGTSTGGLLTAMISTPNENNRPFAAAKEIVPFYFEHGPQIFNPSGQILGPKYDGKYLMQVLQEKLGETRVHQALTEVVISSFDIKTNKPVIFTKSNLANSPELDAKMYDISYSTAAAPTYFPPHYFVTNTSNGDEYEFNLVDGAVATVADPALLSISVATRLAQKDPAFASIRSLNYKKMLLLSLGTGTTSEFDKTYTAKEAATWTAVHWMLVIQKMTDAASSYMTDYYLSTAFQALDSKNNYLRVQENALTGTTTEMDDASEANMELLVQVGENLLKKPVSEDNPETYEEALKRFAKLLSDRKKLRANKASY.

Residues 1–23 (MATTKSFLILIFMILATTSSTFA) form the signal peptide. Residues 32–229 (LSIDGGGIRG…TVADPALLSI (198 aa)) enclose the PNPLA domain. The GXGXXG signature appears at 36–41 (GGGIRG). Residues 75–79 (GTSTG) carry the GXSXG motif. Residue serine 77 is the Nucleophile of the active site. A glycan (N-linked (GlcNAc...) asparagine) is linked at asparagine 202. Residue aspartate 215 is the Proton acceptor of the active site. A DGA/G motif is present at residues 215–217 (DGA). Positions 321–384 (ENALTGTTTE…DRKKLRANKA (64 aa)) form a coiled coil.

The protein belongs to the patatin family.

Its subcellular location is the vacuole. Its function is as follows. Non-specific lipolytic acyl hydrolase (LAH), an activity which is thought to be involved in the response of tubers to pathogens. Catalyzes the non-specific hydrolysis of phospholipids, glycolipids, sulfolipids, and mono- and diacylglycerols includng p-nitrophenyl caprate. Confers resistance to southern corn rootworm (SCRW). The chain is Patatin-17 from Solanum cardiophyllum (Heartleaf nightshade).